A 219-amino-acid polypeptide reads, in one-letter code: MSTIQLEAQSRTDMGKGASRRLRRLENKVPAVIYGGSKKPMAIHFSHNKVIKALETESIYSSVFDITVDGKVEHVILKALQRHPYKPIVLHMDLQRVSSKDILVKLVPVHFINEEQSPGIKAGGIVQHTMTQVEIRCQAKDLPEFIEVDMSKVGMDDVVHLSDLKLPKGVQLTVDVADGSHDAPVVSIHAAKVSSTELEETPEVPASAVPTTDQGESAE.

The interval 194–219 is disordered; it reads SSTELEETPEVPASAVPTTDQGESAE. Positions 209–219 are enriched in polar residues; it reads VPTTDQGESAE.

This sequence belongs to the bacterial ribosomal protein bL25 family. CTC subfamily. In terms of assembly, part of the 50S ribosomal subunit; part of the 5S rRNA/L5/L18/L25 subcomplex. Contacts the 5S rRNA. Binds to the 5S rRNA independently of L5 and L18.

This is one of the proteins that binds to the 5S RNA in the ribosome where it forms part of the central protuberance. The sequence is that of Large ribosomal subunit protein bL25 from Legionella pneumophila (strain Paris).